Consider the following 167-residue polypeptide: uncharacterized protein (167 aa).

The span at 1 to 10 (MPLRRCRAWR) shows a compositional bias: basic residues. The disordered stretch occupies residues 1–23 (MPLRRCRAWRGHSQPGTGSRSNE).

This is an uncharacterized protein from Sinorhizobium fredii (strain NBRC 101917 / NGR234).